The sequence spans 445 residues: MKQRQFFGTDGIRGKVGAGKMTPELALKLGWAAGRVLSRSGTQKVIIGKDTRISGYLFESALEAGLSAAGLDVMLIGPMPTPAVAYLTRTFRAEAGIVISASHNPYYDNGIKFFANDGSKLDDEVELEIEAELEKPLTCVESHLLGKVNRIDDAAGRYIEYCKSHFPAEQTLSGLKIVVDCAHGATYHIAPSVFRELGAEVIAIGDKPNGLNINDKVGATSMGQICETVLAENADLGIALDGDGDRIMMVNRHGRVIDGDEILYILACDAQKRGVLRGGVVGTLMSNLGLDLALQALEIPFVRSKVGDRYVMELLKEHDWRIGGENSGHILNLDHGTTGDGIVAGILVLAAMQRQNASLEALTANITMLPQVLVNVRFEGDNDPLASEVVLAAQAEVEQKLGARGRVLLRKSGTEPLLRVMVEGDEQEAVTEYANYIADAVRNLV.

The active-site Phosphoserine intermediate is Ser-102. The Mg(2+) site is built by Ser-102, Asp-241, Asp-243, and Asp-245. Phosphoserine is present on Ser-102.

Belongs to the phosphohexose mutase family. Requires Mg(2+) as cofactor. Post-translationally, activated by phosphorylation.

The catalysed reaction is alpha-D-glucosamine 1-phosphate = D-glucosamine 6-phosphate. In terms of biological role, catalyzes the conversion of glucosamine-6-phosphate to glucosamine-1-phosphate. The chain is Phosphoglucosamine mutase from Shewanella pealeana (strain ATCC 700345 / ANG-SQ1).